Consider the following 174-residue polypeptide: Chorismate pyruvate-lyase (174 aa).

Residues Met-36, Arg-78, Leu-116, and Glu-157 each contribute to the substrate site.

It belongs to the UbiC family. In terms of assembly, monomer.

The protein localises to the cytoplasm. The enzyme catalyses chorismate = 4-hydroxybenzoate + pyruvate. The protein operates within cofactor biosynthesis; ubiquinone biosynthesis. In terms of biological role, removes the pyruvyl group from chorismate, with concomitant aromatization of the ring, to provide 4-hydroxybenzoate (4HB) for the ubiquinone pathway. The sequence is that of Chorismate pyruvate-lyase from Erwinia tasmaniensis (strain DSM 17950 / CFBP 7177 / CIP 109463 / NCPPB 4357 / Et1/99).